We begin with the raw amino-acid sequence, 110 residues long: Putative UPF0377 protein YIR040C (110 aa).

The protein belongs to the UPF0377 family.

The chain is Putative UPF0377 protein YIR040C from Saccharomyces cerevisiae (strain ATCC 204508 / S288c) (Baker's yeast).